Reading from the N-terminus, the 418-residue chain is Histidine--tRNA ligase (418 aa).

The protein belongs to the class-II aminoacyl-tRNA synthetase family. Homodimer.

Its subcellular location is the cytoplasm. It carries out the reaction tRNA(His) + L-histidine + ATP = L-histidyl-tRNA(His) + AMP + diphosphate + H(+). In Dehalococcoides mccartyi (strain ATCC BAA-2100 / JCM 16839 / KCTC 5957 / BAV1), this protein is Histidine--tRNA ligase.